Here is a 363-residue protein sequence, read N- to C-terminus: Phosphate acyltransferase (363 aa).

The segment at Ala-326 to Gly-363 is disordered. The span at Glu-337–Pro-354 shows a compositional bias: low complexity.

The protein belongs to the PlsX family. As to quaternary structure, homodimer. Probably interacts with PlsY.

The protein localises to the cytoplasm. The enzyme catalyses a fatty acyl-[ACP] + phosphate = an acyl phosphate + holo-[ACP]. The protein operates within lipid metabolism; phospholipid metabolism. Its function is as follows. Catalyzes the reversible formation of acyl-phosphate (acyl-PO(4)) from acyl-[acyl-carrier-protein] (acyl-ACP). This enzyme utilizes acyl-ACP as fatty acyl donor, but not acyl-CoA. This chain is Phosphate acyltransferase, found in Synechococcus sp. (strain JA-3-3Ab) (Cyanobacteria bacterium Yellowstone A-Prime).